Consider the following 85-residue polypeptide: Large ribosomal subunit protein bL27 (85 aa).

The tract at residues Met1–Gly22 is disordered.

Belongs to the bacterial ribosomal protein bL27 family.

This chain is Large ribosomal subunit protein bL27, found in Anaeromyxobacter sp. (strain Fw109-5).